The primary structure comprises 665 residues: Translation factor guf1, mitochondrial (665 aa).

The transit peptide at M1–R40 directs the protein to the mitochondrion. One can recognise a tr-type G domain in the interval E67 to I247. GTP is bound by residues A76–S83, D140–H144, and N194–D197.

It belongs to the TRAFAC class translation factor GTPase superfamily. Classic translation factor GTPase family. LepA subfamily.

The protein resides in the mitochondrion inner membrane. It catalyses the reaction GTP + H2O = GDP + phosphate + H(+). Functionally, promotes mitochondrial protein synthesis. May act as a fidelity factor of the translation reaction, by catalyzing a one-codon backward translocation of tRNAs on improperly translocated ribosomes. Binds to mitochondrial ribosomes in a GTP-dependent manner. This Aspergillus terreus (strain NIH 2624 / FGSC A1156) protein is Translation factor guf1, mitochondrial (guf1).